The sequence spans 363 residues: UDP-N-acetylglucosamine--N-acetylmuramyl-(pentapeptide) pyrophosphoryl-undecaprenol N-acetylglucosamine transferase (363 aa).

Residues Thr21 to Gly23, Asn129, Arg170, Ser196, and Gln290 contribute to the UDP-N-acetyl-alpha-D-glucosamine site.

It belongs to the glycosyltransferase 28 family. MurG subfamily.

Its subcellular location is the cell inner membrane. The catalysed reaction is di-trans,octa-cis-undecaprenyl diphospho-N-acetyl-alpha-D-muramoyl-L-alanyl-D-glutamyl-meso-2,6-diaminopimeloyl-D-alanyl-D-alanine + UDP-N-acetyl-alpha-D-glucosamine = di-trans,octa-cis-undecaprenyl diphospho-[N-acetyl-alpha-D-glucosaminyl-(1-&gt;4)]-N-acetyl-alpha-D-muramoyl-L-alanyl-D-glutamyl-meso-2,6-diaminopimeloyl-D-alanyl-D-alanine + UDP + H(+). It functions in the pathway cell wall biogenesis; peptidoglycan biosynthesis. In terms of biological role, cell wall formation. Catalyzes the transfer of a GlcNAc subunit on undecaprenyl-pyrophosphoryl-MurNAc-pentapeptide (lipid intermediate I) to form undecaprenyl-pyrophosphoryl-MurNAc-(pentapeptide)GlcNAc (lipid intermediate II). The polypeptide is UDP-N-acetylglucosamine--N-acetylmuramyl-(pentapeptide) pyrophosphoryl-undecaprenol N-acetylglucosamine transferase (Synechococcus sp. (strain ATCC 27144 / PCC 6301 / SAUG 1402/1) (Anacystis nidulans)).